The primary structure comprises 85 residues: MNISKNEQRVLHVLAQGGRILYERAPNGRVTEVTCYTREGLILANCKLDVFNKLRRKRLVESKSSRPYQISEKGRRSVRAQLDNR.

Positions Ser-62–Arg-85 are disordered.

The protein belongs to the UPF0386 family.

In Ruegeria sp. (strain TM1040) (Silicibacter sp.), this protein is UPF0386 protein TM1040_0419.